The following is an 811-amino-acid chain: Auxin response factor 8 (811 aa).

The TF-B3 DNA-binding region spans 126-228 (FCKTLTASDT…QLFLGIRHAT (103 aa)). Disordered stretches follow at residues 467 to 496 (HQYLQQSASHNSDLMLQQQQQQQASRHLMH) and 544 to 565 (HLQQWQQQSEMPSPSFMKSDFT). 2 stretches are compositionally biased toward polar residues: residues 469 to 482 (YLQQSASHNSDLML) and 544 to 555 (HLQQWQQQSEMP). The region spanning 705-789 (KNFVKVYKSG…WYIKILSPED (85 aa)) is the PB1 domain.

It belongs to the ARF family. As to quaternary structure, homodimers and heterodimers. As to expression, expressed in the whole plant.

It is found in the nucleus. In terms of biological role, auxin response factors (ARFs) are transcriptional factors that bind specifically to the DNA sequence 5'-TGTCTC-3' found in the auxin-responsive promoter elements (AuxREs). Seems to act as transcriptional activator. Formation of heterodimers with Aux/IAA proteins may alter their ability to modulate early auxin response genes expression. Regulates both stamen and gynoecium maturation. Promotes jasmonic acid production. Partially redundant with ARF6. Involved in fruit initiation. Acts as an inhibitor to stop further carpel development in the absence of fertilization and the generation of signals required to initiate fruit and seed development. The protein is Auxin response factor 8 (ARF8) of Arabidopsis thaliana (Mouse-ear cress).